The chain runs to 501 residues: Glutamate--tRNA ligase (501 aa).

Positions 10-20 (PSPTGSLHIGG) match the 'HIGH' region motif. Positions 251-255 (KLSKR) match the 'KMSKS' region motif. Lys-254 provides a ligand contact to ATP.

It belongs to the class-I aminoacyl-tRNA synthetase family. Glutamate--tRNA ligase type 1 subfamily. Monomer.

Its subcellular location is the cytoplasm. The enzyme catalyses tRNA(Glu) + L-glutamate + ATP = L-glutamyl-tRNA(Glu) + AMP + diphosphate. Catalyzes the attachment of glutamate to tRNA(Glu) in a two-step reaction: glutamate is first activated by ATP to form Glu-AMP and then transferred to the acceptor end of tRNA(Glu). The polypeptide is Glutamate--tRNA ligase (Desulforudis audaxviator (strain MP104C)).